Reading from the N-terminus, the 361-residue chain is Phenylalanine 4-monooxygenase, chloroplastic (361 aa).

The transit peptide at 1–55 directs the protein to the chloroplast; sequence MLALRQGALLLSARGGQTTHDNLQLCAGPSRRPRARWISSAPRPSTLVERHIRPQ. The interval 47 to 67 is disordered; sequence LVERHIRPQASTASDATTSTS. Low complexity predominate over residues 56-67; that stretch reads ASTASDATTSTS. Positions 227, 232, and 272 each coordinate Fe cation.

It belongs to the biopterin-dependent aromatic amino acid hydroxylase family. Requires Fe(2+) as cofactor.

The protein resides in the plastid. Its subcellular location is the chloroplast. The catalysed reaction is (6R)-L-erythro-5,6,7,8-tetrahydrobiopterin + L-phenylalanine + O2 = (4aS,6R)-4a-hydroxy-L-erythro-5,6,7,8-tetrahydrobiopterin + L-tyrosine. Functionally, catalyzes the hydroxylation of L-phenylalanine to L-tyrosine. Can functionally complement an Escherichia coli tyrosine auxotroph. This Chlamydomonas reinhardtii (Chlamydomonas smithii) protein is Phenylalanine 4-monooxygenase, chloroplastic.